A 289-amino-acid polypeptide reads, in one-letter code: Deleted in azoospermia-like (289 aa).

The interval 1 to 20 (MSANAEAQCGSISEDNTHSS) is disordered. Positions 36–117 (NTVFVGGIDI…PAIRKQQNLC (82 aa)) constitute an RRM domain. Residues 162-187 (TYAYSSPAVLIQQQVPVGYQPAYNYQ) enclose the DAZ domain.

This sequence belongs to the RRM DAZ family.

It localises to the cytoplasm. Functionally, RNA-binding protein, which probably plays a central role in gametogenesis in both males and females. Acts by binding to the 3'-UTR of mRNA, specifically recognizing GUU triplets, and promoting the translation of key transcripts. The protein is Deleted in azoospermia-like (DAZL) of Gallus gallus (Chicken).